Here is a 203-residue protein sequence, read N- to C-terminus: Glycerol-3-phosphate acyltransferase (203 aa).

Transmembrane regions (helical) follow at residues 4–24 (LTFA…AVLI), 68–88 (IPVY…FIGI), 104–124 (GGKG…DMGS), and 125–145 (FMIV…LAAI).

It belongs to the PlsY family. In terms of assembly, probably interacts with PlsX.

The protein resides in the cell inner membrane. It carries out the reaction an acyl phosphate + sn-glycerol 3-phosphate = a 1-acyl-sn-glycero-3-phosphate + phosphate. The protein operates within lipid metabolism; phospholipid metabolism. In terms of biological role, catalyzes the transfer of an acyl group from acyl-phosphate (acyl-PO(4)) to glycerol-3-phosphate (G3P) to form lysophosphatidic acid (LPA). This enzyme utilizes acyl-phosphate as fatty acyl donor, but not acyl-CoA or acyl-ACP. The sequence is that of Glycerol-3-phosphate acyltransferase from Tolumonas auensis (strain DSM 9187 / NBRC 110442 / TA 4).